A 347-amino-acid chain; its full sequence is MRALGAVITLLLWGQLFAADFGNEVTDIADDSCPKPPEIANGYVEHLVRYQCKNYYRLRTEGDGVYALNSEKQWVNKAVGEQLPECEAVCGKPKHPVDQVQRIIGGSLDAKGSFPWQAKMVSRHNLVTGATLISEQWLLTTAKNLFLNHTENATAQDIAPTLTLYLGRRQLVEIEKVVLHPNYSEVDIGLIKLKDKVPVNERVMPICLPSKDYTEVGRVGYVSGWGRNSNFTYTDHLKYVMLPVADQDKCIQHYENSTVPENKIPKNPVGVQPILNEHTFCAGMSKYQEDTCYGDAGSTFAIHDLQQDTWYAAGILSFDKSCTVAEYGVYVKTFNILDWIQKTIASN.

The first 18 residues, 1-18 (MRALGAVITLLLWGQLFA), serve as a signal peptide directing secretion. One can recognise a Sushi domain in the interval 31-88 (DSCPKPPEIANGYVEHLVRYQCKNYYRLRTEGDGVYALNSEKQWVNKAVGEQLPECEA). Intrachain disulfides connect cysteine 52/cysteine 86 and cysteine 90/cysteine 207. The Peptidase S1 domain maps to 103–345 (IIGGSLDAKG…ILDWIQKTIA (243 aa)). 5 N-linked (GlcNAc...) asparagine glycosylation sites follow: asparagine 148, asparagine 152, asparagine 182, asparagine 230, and asparagine 256. 2 cysteine pairs are disulfide-bonded: cysteine 250-cysteine 281 and cysteine 292-cysteine 322. The tract at residues 259-264 (VPENKI) is interaction with CD163.

It belongs to the peptidase S1 family. As to quaternary structure, tetramer of two alpha and two beta chains; disulfide-linked. The hemoglobin/haptoglobin complex is composed of a haptoglobin dimer bound to two hemoglobin alpha-beta dimers. Interacts with CD163. Interacts with ERGIC3. Expressed by the liver and secreted in plasma.

The protein resides in the secreted. Its function is as follows. As a result of hemolysis, hemoglobin is found to accumulate in the kidney and is secreted in the urine. Haptoglobin captures, and combines with free plasma hemoglobin to allow hepatic recycling of heme iron and to prevent kidney damage. Haptoglobin also acts as an antioxidant, has antibacterial activity and plays a role in modulating many aspects of the acute phase response. Hemoglobin/haptoglobin complexes are rapidly cleared by the macrophage CD163 scavenger receptor expressed on the surface of liver Kupfer cells through an endocytic lysosomal degradation pathway. The protein is Haptoglobin (HP) of Oryctolagus cuniculus (Rabbit).